The following is a 139-amino-acid chain: Large ribosomal subunit protein uL16c (139 aa).

Positions 1-17 are enriched in basic residues; the sequence is MLSPKKTKFRKQHRGRM. The segment at 1-23 is disordered; it reads MLSPKKTKFRKQHRGRMKGSASK.

The protein belongs to the universal ribosomal protein uL16 family. In terms of assembly, part of the 50S ribosomal subunit.

It localises to the plastid. The protein resides in the chloroplast. This chain is Large ribosomal subunit protein uL16c, found in Porphyra purpurea (Red seaweed).